The following is a 267-amino-acid chain: 3-methyl-2-oxobutanoate hydroxymethyltransferase (267 aa).

Aspartate 45 and aspartate 84 together coordinate Mg(2+). 3-methyl-2-oxobutanoate is bound by residues 45–46 (DS), aspartate 84, and lysine 113. Glutamate 115 is a Mg(2+) binding site. Glutamate 182 acts as the Proton acceptor in catalysis.

It belongs to the PanB family. In terms of assembly, homodecamer; pentamer of dimers. It depends on Mg(2+) as a cofactor.

The protein resides in the cytoplasm. The catalysed reaction is 3-methyl-2-oxobutanoate + (6R)-5,10-methylene-5,6,7,8-tetrahydrofolate + H2O = 2-dehydropantoate + (6S)-5,6,7,8-tetrahydrofolate. It functions in the pathway cofactor biosynthesis; coenzyme A biosynthesis. Its function is as follows. Catalyzes the reversible reaction in which hydroxymethyl group from 5,10-methylenetetrahydrofolate is transferred onto alpha-ketoisovalerate to form ketopantoate. The chain is 3-methyl-2-oxobutanoate hydroxymethyltransferase from Saccharolobus islandicus (strain L.S.2.15 / Lassen #1) (Sulfolobus islandicus).